Consider the following 318-residue polypeptide: Polyprenal reductase (318 aa).

At Met1–Trp19 the chain is on the cytoplasmic side. Residues Leu20–Leu40 form a helical membrane-spanning segment. Residues Pro41–Tyr80 lie on the Lumenal side of the membrane. The chain crosses the membrane as a helical span at residues Ile81–Gly101. The Cytoplasmic segment spans residues Val102–Gln119. The helical transmembrane segment at Phe120–Ser140 threads the bilayer. The Lumenal portion of the chain corresponds to Leu141–Thr156. The helical transmembrane segment at Val157–Val177 threads the bilayer. At Leu178 to Asn194 the chain is on the cytoplasmic side. A helical membrane pass occupies residues Leu195–Val215. Over His216–Ser265 the chain is Lumenal. The helical transmembrane segment at Met266–Phe286 threads the bilayer. Topologically, residues Ser287–Phe318 are cytoplasmic.

Belongs to the steroid 5-alpha reductase family. Polyprenal reductase subfamily.

It localises to the endoplasmic reticulum membrane. The enzyme catalyses a di-trans,poly-cis-dolichal + NADP(+) = a di-trans,poly-cis-polyprenal + NADPH + H(+). It catalyses the reaction a 3-oxo-5alpha-steroid + NADP(+) = a 3-oxo-Delta(4)-steroid + NADPH + H(+). The catalysed reaction is androst-4-ene-3,17-dione + NADPH + H(+) = 5alpha-androstan-3,17-dione + NADP(+). It carries out the reaction 17beta-hydroxy-5alpha-androstan-3-one + NADP(+) = testosterone + NADPH + H(+). It participates in protein modification; protein glycosylation. Its function is as follows. Plays a key role in early steps of protein N-linked glycosylation by being involved in the conversion of polyprenol into dolichol. Acts as a polyprenal reductase that mediates the reduction of polyprenal into dolichal in a NADP-dependent mechanism. Dolichols are required for the synthesis of dolichol-linked monosaccharides and the oligosaccharide precursor used for N-glycosylation. Also able to convert testosterone (T) into 5-alpha-dihydrotestosterone (DHT). In Ailuropoda melanoleuca (Giant panda), this protein is Polyprenal reductase (SRD5A3).